A 667-amino-acid polypeptide reads, in one-letter code: MKEKSKNAAKTRREKENGEFYELAKLLPLPSAITSQLDKASIIRLTTSYLKMRAVFPEGLGDAWGQPSRAGPLDGVAKELGSHLLQTLDGFVFVVASDGKIMYISETASVHLGLSQVELTGNSIYEYIHPSDHDEMTAVLTAHQPLHHHLLQEYEIERSFFLRMKCVLAKRNAGLTCSGYKVIHCSGYLKIRQYMLDMSLYDSCYQIVGLVAVGQSLPPSAITEIKLYSNMFMFRASLDLKLIFLDSRVTEVTGYEPQDLIEKTLYHHVHGCDVFHLRYAHHLLLVKGQVTTKYYRLLSKRGGWVWVQSYATVVHNSRSSRPHCIVSVNYVLTEIEYKELQLSLEQVSTAKSQDSWRTALSTSQETRKLVKPKNTKMKTKLRTNPYPPQQYSSFQMDKLECGQLGNWRASPPASAAAPPELQPHSESSDLLYTPSYSLPFSYHYGHFPLDSHVFSSKKPMLPAKFGQPQGSPCEVARFFLSTLPASGECQWHYANPLVPSSSSPAKNPPEPPANTARHSLVPSYEAPAAAVRRFGEDTAPPSFPSCGHYREEPALGPAKAARQAARDGARLALARAAPECCAPPTPEAPGAPAQLPFVLLNYHRVLARRGPLGGAAPAASGLACAPGGPEAATGALRLRHPSPAATSPPGAPLPHYLGASVIITNGR.

The 53-residue stretch at 1-53 folds into the bHLH domain; sequence MKEKSKNAAKTRREKENGEFYELAKLLPLPSAITSQLDKASIIRLTTSYLKMR. 2 consecutive PAS domains span residues 77–149 and 218–288; these read AKEL…LHHH and PPSA…LVKG. The 44-residue stretch at 292-335 folds into the PAC domain; the sequence is TKYYRLLSKRGGWVWVQSYATVVHNSRSSRPHCIVSVNYVLTEI. Positions 336-667 constitute a Single-minded C-terminal domain; the sequence is EYKELQLSLE…GASVIITNGR (332 aa). Disordered regions lie at residues 356 to 389, 409 to 428, and 500 to 520; these read WRTA…YPPQ, ASPP…SESS, and SSSS…RHSL. The Nuclear localization signal signature appears at 367–386; that stretch reads RKLVKPKNTKMKTKLRTNPY. Basic residues predominate over residues 369-381; sequence LVKPKNTKMKTKL. Over residues 409-419 the composition is skewed to low complexity; that stretch reads ASPPASAAAPP.

In terms of assembly, efficient DNA binding requires dimerization with another bHLH protein. Heterodimer of SIM2 and ARNT.

The protein resides in the nucleus. Transcription factor that may be a master gene of CNS development in cooperation with Arnt. It may have pleiotropic effects in the tissues expressed during development. The sequence is that of Single-minded homolog 2 (SIM2) from Homo sapiens (Human).